Reading from the N-terminus, the 734-residue chain is DNA-binding protein RFX2 (734 aa).

Over residues 1–23 the composition is skewed to polar residues; it reads MQRSEGGSETPSTVALRTSTSAQ. A disordered region spans residues 1-31; the sequence is MQRSEGGSETPSTVALRTSTSAQAPVVQPVP. Residues 204 to 279 constitute a DNA-binding region (RFX-type winged-helix); the sequence is HLQWLLDNYE…YHYYGIRLKP (76 aa). The segment at 694 to 722 is disordered; that stretch reads DTSFSDDMTSDGDMSRMSERSLTEPAVKR. A compositionally biased stretch (basic and acidic residues) spans 706-722; it reads DMSRMSERSLTEPAVKR.

This sequence belongs to the RFX family. As to quaternary structure, homodimer. Heterodimer; heterodimerizes with other rfx proteins.

It localises to the nucleus. The protein localises to the cytoplasm. Its function is as follows. Transcription factor that acts as a key regulator of ciliogenesis. Specifically regulates expression of genes required for cilium assembly and function. Recognizes and binds the X-box, a regulatory motif with DNA sequence 5'-GTNRCC(0-3N)RGYAAC-3' present on promoters. In Danio rerio (Zebrafish), this protein is DNA-binding protein RFX2 (rfx2).